A 465-amino-acid chain; its full sequence is MFRQEQPLAEGSFAPMGSLQPDAGNSSWNGTEAPGGGTRATPYSLQVTLTLVCLAGLLMLFTVFGNVLVIIAVFTSRALKAPQNLFLVSLASADILVATLVIPFSLANEVMGYWYFGKVWCEIYLALDVLFCTSSIVHLCAISLDRYWSITQAIEYNLKRTPRRIKAIIVTVWVISAVISFPPLISIEKKGAGGGQQPAEPSCKINDQKWYVISSSIGSFFAPCLIMILVYVRIYQIAKRRTRVPPSRRGPDACSAPPGGADRRPNGLGPERGAGTAGAEAEPLPTQLNGAPGEPAPTRPRDGDALDLEESSSSEHAERPQGPGKPERGPRAKGKTKASQVKPGDSLPRRGPGAAGPGASGSGQGEERAGGAKASRWRGRQNREKRFTFVLAVVIGVFVVCWFPFFFTYTLIAVGCPVPYQLFNFFFWFGYCNSSLNPVIYTIFNHDFRRAFKKILCRGDRKRIV.

The Extracellular portion of the chain corresponds to 1–48 (MFRQEQPLAEGSFAPMGSLQPDAGNSSWNGTEAPGGGTRATPYSLQVT). N-linked (GlcNAc...) asparagine glycans are attached at residues asparagine 25 and asparagine 29. A helical transmembrane segment spans residues 49–74 (LTLVCLAGLLMLFTVFGNVLVIIAVF). Over 75–85 (TSRALKAPQNL) the chain is Cytoplasmic. Residues 86–111 (FLVSLASADILVATLVIPFSLANEVM) form a helical membrane-spanning segment. The Extracellular portion of the chain corresponds to 112-121 (GYWYFGKVWC). Cysteine 121 and cysteine 203 are oxidised to a cystine. A helical transmembrane segment spans residues 122 to 144 (EIYLALDVLFCTSSIVHLCAISL). Over 145-164 (DRYWSITQAIEYNLKRTPRR) the chain is Cytoplasmic. Residues 165 to 188 (IKAIIVTVWVISAVISFPPLISIE) traverse the membrane as a helical segment. Over 189-207 (KKGAGGGQQPAEPSCKIND) the chain is Extracellular. A helical transmembrane segment spans residues 208–232 (QKWYVISSSIGSFFAPCLIMILVYV). The Cytoplasmic segment spans residues 233–389 (RIYQIAKRRT…RQNREKRFTF (157 aa)). The disordered stretch occupies residues 242-377 (TRVPPSRRGP…RAGGAKASRW (136 aa)). Residues 313-330 (SSEHAERPQGPGKPERGP) show a composition bias toward basic and acidic residues. Serine 346 bears the Phosphoserine mark. Over residues 353-364 (GAAGPGASGSGQ) the composition is skewed to gly residues. The residue at position 368 (arginine 368) is an Omega-N-methylarginine. The chain crosses the membrane as a helical span at residues 390-414 (VLAVVIGVFVVCWFPFFFTYTLIAV). At 415–424 (GCPVPYQLFN) the chain is on the extracellular side. Residues 425–445 (FFFWFGYCNSSLNPVIYTIFN) traverse the membrane as a helical segment. The Cytoplasmic portion of the chain corresponds to 446 to 465 (HDFRRAFKKILCRGDRKRIV). Cysteine 457 carries S-palmitoyl cysteine lipidation.

Belongs to the G-protein coupled receptor 1 family. Adrenergic receptor subfamily. ADRA2A sub-subfamily. As to expression, expressed in brain.

It is found in the cell membrane. Its function is as follows. Alpha-2 adrenergic receptors mediate the catecholamine-induced inhibition of adenylate cyclase through the action of G proteins. This is Alpha-2A adrenergic receptor from Rattus norvegicus (Rat).